The chain runs to 279 residues: MKKSLTVTVSSVLAFLALNNAAHAQQHGTQVKTPVQHNYVSNVQAQTQSPTTYTVVAGDSLYKIALEHHLTLNQLYSYNPGVTPLIFPGDVISLVPQNKVKQTKAVKSPVRKASQAKKVVKQPVQQASKKVVVKQAPKQAVTKTVNVAYKPAQVQKSVPTVPVAHNYNKSVANRGNLYAYGNCTYYAFDRRAQLGRSIGSLWGNANNWNYAAKVAGFKVDKTPEVGAIFQTAAGPYGHVGVVESVNPNGTITVSEMNYAGFNVKSSRTILNPGKYNYIH.

Positions 1–24 (MKKSLTVTVSSVLAFLALNNAAHA) are cleaved as a signal peptide. Positions 51 to 94 (TTYTVVAGDSLYKIALEHHLTLNQLYSYNPGVTPLIFPGDVISL) constitute a LysM domain. Residues 158–279 (VPTVPVAHNY…LNPGKYNYIH (122 aa)) enclose the Peptidase C51 domain.

It carries out the reaction Hydrolyzes the link between N-acetylmuramoyl residues and L-amino acid residues in certain cell-wall glycopeptides.. Functionally, has weak lytic activity toward S.aureus cells. The polypeptide is Probable autolysin LDP (Staphylococcus aureus (strain NCTC 8325 / PS 47)).